The primary structure comprises 126 residues: MADLAKIVEDLSSLTVLEAAELSKLLEEKWGVSAAAPVAVAAAGGAAGAAAPVEEEKTEFDVILTDAGANKINVIKEVRAITGLGLKEAKDLVEGAPKAVKEAVSKAEAADLKKKLEDAGAKVDVK.

It belongs to the bacterial ribosomal protein bL12 family. As to quaternary structure, homodimer. Part of the ribosomal stalk of the 50S ribosomal subunit. Forms a multimeric L10(L12)X complex, where L10 forms an elongated spine to which 2 to 4 L12 dimers bind in a sequential fashion. Binds GTP-bound translation factors.

Forms part of the ribosomal stalk which helps the ribosome interact with GTP-bound translation factors. Is thus essential for accurate translation. The polypeptide is Large ribosomal subunit protein bL12 (Rhizobium meliloti (strain 1021) (Ensifer meliloti)).